A 365-amino-acid chain; its full sequence is Mitogen-activated protein kinase 13 (365 aa).

The 284-residue stretch at 25 to 308 (YVSPTHVGSG…AAQALTHPFF (284 aa)) folds into the Protein kinase domain. Position 31–39 (31–39 (VGSGAYGSV)) interacts with ATP. A Phosphoserine modification is found at serine 47. Lysine 54 provides a ligand contact to ATP. Aspartate 150 serves as the catalytic Proton acceptor. Phosphothreonine; by MAP2K3, MAP2K4, MAP2K6 and MAP2K7 is present on threonine 180. The TXY motif lies at 180-182 (TGY). Tyrosine 182 bears the Phosphotyrosine; by MAP2K3, MAP2K4, MAP2K6 and MAP2K7 mark. Residue serine 350 is modified to Phosphoserine.

This sequence belongs to the protein kinase superfamily. CMGC Ser/Thr protein kinase family. MAP kinase subfamily. As to quaternary structure, interacts with MAPK8IP2. Mg(2+) serves as cofactor. Dually phosphorylated on Thr-180 and Tyr-182 by MAP2K3/MKK3, MAP2K4/MKK4, MAP2K6/MKK6 and MAP2K7/MKK7, which activates the enzyme. Dephosphorylated by dual specificity phosphatase DUSP1. As to expression, expressed in testes, pancreas, small intestine, lung and kidney. Abundant in macrophages, also present in neutrophils, CD4+ T-cells, and endothelial cells.

It carries out the reaction L-seryl-[protein] + ATP = O-phospho-L-seryl-[protein] + ADP + H(+). The enzyme catalyses L-threonyl-[protein] + ATP = O-phospho-L-threonyl-[protein] + ADP + H(+). With respect to regulation, activated by phosphorylation on threonine and tyrosine by dual specificity kinases, MAP2K3/MKK3, MAP2K6/MKK6, MAP2K4/MKK4 and MAP2K7/MKK7. Activation by ultraviolet radiation, hyperosmotic shock, anisomycin or by TNF-alpha is mediated by MAP2K3/MKK3. Inhibited by dual specificity phosphatase DUSP1. Its function is as follows. Serine/threonine kinase which acts as an essential component of the MAP kinase signal transduction pathway. MAPK13 is one of the four p38 MAPKs which play an important role in the cascades of cellular responses evoked by extracellular stimuli such as pro-inflammatory cytokines or physical stress leading to direct activation of transcription factors such as ELK1 and ATF2. Accordingly, p38 MAPKs phosphorylate a broad range of proteins and it has been estimated that they may have approximately 200 to 300 substrates each. MAPK13 is one of the less studied p38 MAPK isoforms. Some of the targets are downstream kinases such as MAPKAPK2, which are activated through phosphorylation and further phosphorylate additional targets. Plays a role in the regulation of protein translation by phosphorylating and inactivating EEF2K. Involved in cytoskeletal remodeling through phosphorylation of MAPT and STMN1. Mediates UV irradiation induced up-regulation of the gene expression of CXCL14. Plays an important role in the regulation of epidermal keratinocyte differentiation, apoptosis and skin tumor development. Phosphorylates the transcriptional activator MYB in response to stress which leads to rapid MYB degradation via a proteasome-dependent pathway. MAPK13 also phosphorylates and down-regulates PRKD1 during regulation of insulin secretion in pancreatic beta cells. In Homo sapiens (Human), this protein is Mitogen-activated protein kinase 13 (MAPK13).